The chain runs to 302 residues: UDP-3-O-acyl-N-acetylglucosamine deacetylase (302 aa).

3 residues coordinate Zn(2+): His82, His238, and Asp242. His265 (proton donor) is an active-site residue.

This sequence belongs to the LpxC family. It depends on Zn(2+) as a cofactor.

It carries out the reaction a UDP-3-O-[(3R)-3-hydroxyacyl]-N-acetyl-alpha-D-glucosamine + H2O = a UDP-3-O-[(3R)-3-hydroxyacyl]-alpha-D-glucosamine + acetate. It participates in glycolipid biosynthesis; lipid IV(A) biosynthesis; lipid IV(A) from (3R)-3-hydroxytetradecanoyl-[acyl-carrier-protein] and UDP-N-acetyl-alpha-D-glucosamine: step 2/6. Its function is as follows. Catalyzes the hydrolysis of UDP-3-O-myristoyl-N-acetylglucosamine to form UDP-3-O-myristoylglucosamine and acetate, the committed step in lipid A biosynthesis. The polypeptide is UDP-3-O-acyl-N-acetylglucosamine deacetylase (Leptospira biflexa serovar Patoc (strain Patoc 1 / Ames)).